A 307-amino-acid chain; its full sequence is Cytochrome c1 1, heme protein, mitochondrial (307 aa).

The transit peptide at 1–64 directs the protein to the mitochondrion; that stretch reads MVGGGVIQQI…LLSFSTVASA (64 aa). The Mitochondrial intermembrane portion of the chain corresponds to 65-270; the sequence is DEAEHGLESP…EPEMEERKLM (206 aa). In terms of domain architecture, Cytochrome c spans 90–246; sequence ASIRRGHQVY…YEDGVPATEA (157 aa). 4 residues coordinate heme c: C103, C106, H107, and M226. The helical transmembrane segment at 271 to 288 threads the bilayer; sequence GFKWIFLLSLALLQAAYY. Residues 289 to 307 are Mitochondrial matrix-facing; sequence RRLKWSVLKSRKLVLDVVN.

This sequence belongs to the cytochrome c family. In terms of assembly, component of the ubiquinol-cytochrome c oxidoreductase (cytochrome b-c1 complex, complex III, CIII), a multisubunit enzyme composed of 10 subunits. The complex is composed of 3 respiratory subunits cytochrome b (MT-CYB), cytochrome c1 (CYC1-1 or CYC1-2) and Rieske protein (UCR1-1 or UCR1-2), 2 core protein subunits MPPalpha1 (or MPPalpha2) and MPPB, and 5 low-molecular weight protein subunits QCR7-1 (or QCR7-2), UCRQ-1 (or UCRQ-2), QCR9, UCRY and probably QCR6-1 (or QCR6-2). The complex exists as an obligatory dimer and forms supercomplexes (SCs) in the inner mitochondrial membrane with NADH-ubiquinone oxidoreductase (complex I, CI), resulting in different assemblies (supercomplexes SCI(1)III(2) and SCI(2)III(4)). In terms of processing, binds 1 heme c group covalently per subunit.

Its subcellular location is the mitochondrion inner membrane. Functionally, component of the ubiquinol-cytochrome c oxidoreductase, a multisubunit transmembrane complex that is part of the mitochondrial electron transport chain which drives oxidative phosphorylation. The respiratory chain contains 3 multisubunit complexes succinate dehydrogenase (complex II, CII), ubiquinol-cytochrome c oxidoreductase (cytochrome b-c1 complex, complex III, CIII) and cytochrome c oxidase (complex IV, CIV), that cooperate to transfer electrons derived from NADH and succinate to molecular oxygen, creating an electrochemical gradient over the inner membrane that drives transmembrane transport and the ATP synthase. The cytochrome b-c1 complex catalyzes electron transfer from ubiquinol to cytochrome c, linking this redox reaction to translocation of protons across the mitochondrial inner membrane, with protons being carried across the membrane as hydrogens on the quinol. In the process called Q cycle, 2 protons are consumed from the matrix, 4 protons are released into the intermembrane space and 2 electrons are passed to cytochrome c. Cytochrome c1 is a catalytic core subunit containing a c-type heme. It transfers electrons from the [2Fe-2S] iron-sulfur cluster of the Rieske protein to cytochrome c. The polypeptide is Cytochrome c1 1, heme protein, mitochondrial (CYC1-1) (Arabidopsis thaliana (Mouse-ear cress)).